The following is a 92-amino-acid chain: Calitoxin (92 aa).

The first 20 residues, 1–20, serve as a signal peptide directing secretion; the sequence is MKTQVLVVLVLCVVFCLAES. Positions 21–42 are excised as a propeptide; the sequence is RNSMTSEERGLVSLMRQRDDIA. Disulfide bonds link C47-C86, C49-C77, and C67-C87.

This sequence belongs to the sea anemone sodium channel inhibitory toxin family. As to expression, expressed both outside and in acontia, a specialised envenomation structure laden with batteries of venom-containing nematocysts found only in the superfamily Metridioidea.

The protein localises to the secreted. The protein resides in the nematocyst. In terms of biological role, in neuromuscular preparation of crustaceans, the toxin increased neurotransmitter release, causing repetitive firing of the axons. May affect sodium channels (Nav). The sequence is that of Calitoxin from Calliactis polypus (Hermit crab anemone).